Reading from the N-terminus, the 127-residue chain is Large ribosomal subunit protein bL17 (127 aa).

Belongs to the bacterial ribosomal protein bL17 family. As to quaternary structure, part of the 50S ribosomal subunit. Contacts protein L32.

The polypeptide is Large ribosomal subunit protein bL17 (Stenotrophomonas maltophilia (strain K279a)).